The primary structure comprises 222 residues: Deoxyribose-phosphate aldolase (222 aa).

The active-site Proton donor/acceptor is the D90. Residue K152 is the Schiff-base intermediate with acetaldehyde of the active site. The Proton donor/acceptor role is filled by K181.

This sequence belongs to the DeoC/FbaB aldolase family. DeoC type 1 subfamily.

It localises to the cytoplasm. The catalysed reaction is 2-deoxy-D-ribose 5-phosphate = D-glyceraldehyde 3-phosphate + acetaldehyde. Its pathway is carbohydrate degradation; 2-deoxy-D-ribose 1-phosphate degradation; D-glyceraldehyde 3-phosphate and acetaldehyde from 2-deoxy-alpha-D-ribose 1-phosphate: step 2/2. In terms of biological role, catalyzes a reversible aldol reaction between acetaldehyde and D-glyceraldehyde 3-phosphate to generate 2-deoxy-D-ribose 5-phosphate. In Pectobacterium carotovorum subsp. carotovorum (strain PC1), this protein is Deoxyribose-phosphate aldolase.